Consider the following 239-residue polypeptide: 3,4-dihydroxyphthalate decarboxylase (239 aa).

The Proton donor/acceptor role is filled by Glu-84. Positions 84, 103, 105, and 171 each coordinate a divalent metal cation.

Belongs to the aldolase class II family. A divalent metal cation is required as a cofactor.

The catalysed reaction is 3,4-dihydroxyphthalate + H(+) = 3,4-dihydroxybenzoate + CO2. The protein operates within xenobiotic degradation; phthalate degradation. In terms of biological role, catalyzes the decarboxylation of 3,4-dihydroxyphthalate to protocatechuate (3,4-dihydroxybenzoate) during phthalate metabolism. The chain is 3,4-dihydroxyphthalate decarboxylase from Terrabacter sp. (strain DBF63).